The chain runs to 907 residues: Envelope glycoprotein B (907 aa).

The signal sequence occupies residues 1 to 24; the sequence is MESRIWCLVVCVNLCIVCLGAAVS. At 25 to 751 the chain is on the virion surface side; the sequence is SSSTRGTSAT…EGVATFLKNP (727 aa). The interval 29 to 62 is disordered; that stretch reads RGTSATHSHHSSHTTSAAHSRSGSVSQRVTSSQT. Over residues 41 to 62 the composition is skewed to low complexity; it reads HTTSAAHSRSGSVSQRVTSSQT. Asn-68, Asn-73, and Asn-85 each carry an N-linked (GlcNAc...) asparagine; by host glycan. 4 disulfide bridges follow: Cys-94–Cys-551, Cys-111–Cys-507, Cys-185–Cys-250, and Cys-344–Cys-391. The tract at residues 152-158 is involved in fusion and/or binding to host membrane; the sequence is SYAYIHT. An N-linked (GlcNAc...) asparagine; by host glycan is attached at Asn-208. The interval 237 to 244 is involved in fusion and/or binding to host membrane; that stretch reads GSTWLYRE. Residues Asn-281, Asn-286, Asn-302, Asn-341, Asn-383, Asn-405, Asn-409, Asn-417, Asn-447, Asn-452, Asn-456, Asn-466, Asn-555, and Asn-586 are each glycosylated (N-linked (GlcNAc...) asparagine; by host). A disulfide bond links Cys-574 and Cys-611. Residues 697 to 749 form a hydrophobic membrane proximal region region; it reads VEDKVVDPLPPYLKGLDDLMSGLGAAGKAVGVAIGAVGGAVASVVEGVATFLK. The helical transmembrane segment at 752–772 threads the bilayer; the sequence is FGAFTIILVAIAVVIITYLIY. Residues 773-907 lie on the Intravirion side of the membrane; sequence TRQRRLCTQP…LKDSDEEENV (135 aa). 2 stretches are compositionally biased toward polar residues: residues 798-810 and 860-877; these read VTSG…SLQA and RAQQ…GTQD. Disordered stretches follow at residues 798-838 and 857-907; these read VTSG…TAAP and AEQR…EENV. Over residues 878–887 the composition is skewed to basic and acidic residues; it reads KGQKPNLLDR. Positions 895–898 match the Internalization motif motif; the sequence is YRHL.

Belongs to the herpesviridae glycoprotein B family. As to quaternary structure, homotrimer; disulfide-linked. Binds to heparan sulfate proteoglycans. Interacts with gH/gL heterodimer. Post-translationally, a proteolytic cleavage by host furin generates two subunits that remain linked by disulfide bonds.

It is found in the virion membrane. It localises to the host cell membrane. The protein localises to the host endosome membrane. The protein resides in the host Golgi apparatus membrane. Its function is as follows. Envelope glycoprotein that forms spikes at the surface of virion envelope. Essential for the initial attachment to heparan sulfate moieties of the host cell surface proteoglycans. Involved in fusion of viral and cellular membranes leading to virus entry into the host cell. Following initial binding to its host receptors, membrane fusion is mediated by the fusion machinery composed at least of gB and the heterodimer gH/gL. May be involved in the fusion between the virion envelope and the outer nuclear membrane during virion egress. This is Envelope glycoprotein B from Human cytomegalovirus (strain Merlin) (HHV-5).